The primary structure comprises 477 residues: Otoconin-90 (477 aa).

Residues 1–17 (MIAFLLTSVLMIPHAGG) form the signal peptide. An N-linked (GlcNAc...) asparagine glycan is attached at N38. 3 phospholipase A2-like regions span residues 76–190 (LIQF…TSFC), 305–361 (MPQL…RLGC), and 373–425 (CVDH…PAAC). 7 cysteine pairs are disulfide-bonded: C85–C145, C99–C190, C101–C117, C116–C172, C123–C165, C132–C158, and C152–C163. N179 carries an N-linked (GlcNAc...) asparagine glycan. N407 is a glycosylation site (N-linked (GlcNAc...) asparagine). The disordered stretch occupies residues 428-477 (SLHPVPAAPTLGSSSEEDSEEDPPQEDLGRAKRFLRKSLGPLGIGPLHGR). Residues 442-452 (SEEDSEEDPPQ) are compositionally biased toward acidic residues.

This sequence belongs to the phospholipase A2 family. In terms of assembly, interacts with OTOL1.

Its subcellular location is the secreted. Major protein of the otoconia, a calcium carbonate structure in the saccule and utricle of the ear. Together with OTOL1, acts as a scaffold for otoconia biomineralization: sequesters calcium and forms interconnecting fibrils between otoconia that are incorporated into the calcium crystal structure. Together with OTOL1, modulates calcite crystal morphology and growth kinetics. It is unlikely that this protein has phospholipase A2 activity. The sequence is that of Otoconin-90 from Homo sapiens (Human).